Consider the following 76-residue polypeptide: Small ribosomal subunit protein bS18 (76 aa).

Belongs to the bacterial ribosomal protein bS18 family. Part of the 30S ribosomal subunit. Forms a tight heterodimer with protein bS6.

Functionally, binds as a heterodimer with protein bS6 to the central domain of the 16S rRNA, where it helps stabilize the platform of the 30S subunit. This is Small ribosomal subunit protein bS18 from Petrotoga mobilis (strain DSM 10674 / SJ95).